The sequence spans 361 residues: MLLELARWLQQLESLFGLFNYLTFRGILAALTALFLSLWMGPAVIRKLAQFKGGQPIRQDGPQTHFSKAGTPTMGGSLILLTVTLSVLLWGDLRNRYVWLVLAVMICFGAIGWYDDWIKIVRRDPNGLKSRWKYLLQSIFGLAAGLFLYYTADVPAAITFYIPMFKSIALPLAGVSFVVIAYFWIVGFSNAVNLTDGLDGLAIMPTVLVACALGVFAYASGNVVFAEYLKIPLIPGAGELIIICSAIAGAGLGFLWFNTYPAMVFMGDIGALSLGAVLGTIAVIVRQEMVLVIMGGVFVIETLSVIIQVASFKLTGKRVFRMAPIHHHFELKGWPEPRVIVRFWIISVVLVLIGLATLKVR.

The next 10 helical transmembrane spans lie at 25-45 (RGIL…PAVI), 73-93 (TMGG…WGDL), 98-118 (VWLV…DDWI), 139-159 (IFGL…AAIT), 168-188 (IALP…IVGF), 200-220 (GLAI…AYAS), 237-257 (AGEL…FLWF), 264-284 (VFMG…IAVI), 289-309 (MVLV…IIQV), and 339-359 (VIVR…ATLK).

The protein belongs to the glycosyltransferase 4 family. MraY subfamily. It depends on Mg(2+) as a cofactor.

The protein localises to the cell inner membrane. The catalysed reaction is UDP-N-acetyl-alpha-D-muramoyl-L-alanyl-gamma-D-glutamyl-meso-2,6-diaminopimeloyl-D-alanyl-D-alanine + di-trans,octa-cis-undecaprenyl phosphate = di-trans,octa-cis-undecaprenyl diphospho-N-acetyl-alpha-D-muramoyl-L-alanyl-D-glutamyl-meso-2,6-diaminopimeloyl-D-alanyl-D-alanine + UMP. Its pathway is cell wall biogenesis; peptidoglycan biosynthesis. In terms of biological role, catalyzes the initial step of the lipid cycle reactions in the biosynthesis of the cell wall peptidoglycan: transfers peptidoglycan precursor phospho-MurNAc-pentapeptide from UDP-MurNAc-pentapeptide onto the lipid carrier undecaprenyl phosphate, yielding undecaprenyl-pyrophosphoryl-MurNAc-pentapeptide, known as lipid I. This chain is Phospho-N-acetylmuramoyl-pentapeptide-transferase, found in Xanthomonas oryzae pv. oryzae (strain PXO99A).